A 119-amino-acid polypeptide reads, in one-letter code: MARFVVVALLVLLSVSDLEAIQHPPKIQVYSRYPADNGKPNFLNCYVSGFHPSDIEVDLLKNGKKIEKVEHSDLSFSKDWSFYLLYYTEFTPNEKDEYACRVSHVTFLTPKTVKWDRNM.

The first 20 residues, 1 to 20 (MARFVVVALLVLLSVSDLEA), serve as a signal peptide directing secretion. In terms of domain architecture, Ig-like C1-type spans 25-114 (PKIQVYSRYP…VTFLTPKTVK (90 aa)). An intrachain disulfide couples cysteine 45 to cysteine 100.

This sequence belongs to the beta-2-microglobulin family. In terms of assembly, heterodimer of an alpha chain and a beta chain. Beta-2-microglobulin is the beta-chain of major histocompatibility complex class I molecules.

Its subcellular location is the secreted. Component of the class I major histocompatibility complex (MHC). Involved in the presentation of peptide antigens to the immune system. The protein is Beta-2-microglobulin (B2M) of Leontocebus fuscicollis (Brown-mantled tamarin).